The chain runs to 97 residues: Small ribosomal subunit protein uS17 (97 aa).

The tract at residues 1–20 is disordered; it reads MSEATVNDNAAVKNEKGARK.

Belongs to the universal ribosomal protein uS17 family. Part of the 30S ribosomal subunit.

Its function is as follows. One of the primary rRNA binding proteins, it binds specifically to the 5'-end of 16S ribosomal RNA. This is Small ribosomal subunit protein uS17 from Corynebacterium jeikeium (strain K411).